A 336-amino-acid polypeptide reads, in one-letter code: Corrinoid adenosyltransferase PduO (336 aa).

Residues 1–185 are pduON; it reads MAIYTRTGDA…IIREVSKRYL (185 aa). Residues 194–336 form a pduOC region; sequence KETTPVALSF…IAAINVGTHQ (143 aa). H207 contacts heme. Mg(2+)-binding residues include E215 and Q218.

The protein belongs to the Cob(I)alamin adenosyltransferase family. PduO subfamily. As to quaternary structure, the C-terminal domain (PduOC) forms stable octamers and also crystallizes as an octamer. Forms a complex with PduS. Heme b is required as a cofactor. The cofactor is Mg(2+).

The protein resides in the bacterial microcompartment. It carries out the reaction cob(I)alamin-[corrinoid adenosyltransferase] + ATP = apo-[corrinoid adenosyltransferase] + adenosylcob(III)alamin + triphosphate. The protein operates within polyol metabolism; 1,2-propanediol degradation. Its pathway is cofactor biosynthesis; adenosylcobalamin biosynthesis. Its activity is regulated as follows. Inhibited by ADP but not significantly by other nucleotides, inhibited by diphosphate and less well by triphosphate. Converts cob(I)alamin to adenosylcobalamin (adenosylcob(III)alamin), the cofactor for propanediol dehydratase. Found in the bacterial microcompartment (BMC) dedicated to 1,2-propanediol (1,2-PD) degradation. For adenosylcobalamin synthesis dATP can replace ATP, but no other nucleotides will substitute. PduS and PduO allow regeneration of the adenosylcobalamin cofactor within the BMC. Functionally, the 1,2-PD-specific bacterial microcompartment (BMC) concentrates low levels of 1,2-PD catabolic enzymes, concentrates volatile reaction intermediates thus enhancing pathway flux and keeps the level of toxic, mutagenic propionaldehyde low. In Salmonella typhimurium (strain LT2 / SGSC1412 / ATCC 700720), this protein is Corrinoid adenosyltransferase PduO.